The chain runs to 143 residues: Transcriptional regulator MraZ (143 aa).

2 SpoVT-AbrB domains span residues 5–47 and 76–119; these read EFQH…TLTE and AVEV…DRKL.

It belongs to the MraZ family. As to quaternary structure, forms oligomers.

The protein resides in the cytoplasm. The protein localises to the nucleoid. In Macrococcus caseolyticus (strain JCSC5402) (Macrococcoides caseolyticum), this protein is Transcriptional regulator MraZ.